Here is a 64-residue protein sequence, read N- to C-terminus: Large ribosomal subunit protein bL35 (64 aa).

It belongs to the bacterial ribosomal protein bL35 family.

In Alcanivorax borkumensis (strain ATCC 700651 / DSM 11573 / NCIMB 13689 / SK2), this protein is Large ribosomal subunit protein bL35.